The chain runs to 968 residues: RNA polymerase-associated protein RapA (968 aa).

Positions 164–334 (DVGRRHAPRV…FARLRLLDPN (171 aa)) constitute a Helicase ATP-binding domain. Residue 177–184 (DEVGLGKT) participates in ATP binding. Residues 280 to 283 (DEAH) carry the DEAH box motif. The Helicase C-terminal domain maps to 490–644 (RVEWLMGYLT…TCPTGRAIYD (155 aa)).

Belongs to the SNF2/RAD54 helicase family. RapA subfamily. Interacts with the RNAP. Has a higher affinity for the core RNAP than for the holoenzyme. Its ATPase activity is stimulated by binding to RNAP.

Functionally, transcription regulator that activates transcription by stimulating RNA polymerase (RNAP) recycling in case of stress conditions such as supercoiled DNA or high salt concentrations. Probably acts by releasing the RNAP, when it is trapped or immobilized on tightly supercoiled DNA. Does not activate transcription on linear DNA. Probably not involved in DNA repair. This is RNA polymerase-associated protein RapA from Salmonella arizonae (strain ATCC BAA-731 / CDC346-86 / RSK2980).